The chain runs to 320 residues: Probable trehalose-phosphate phosphatase C (320 aa).

This sequence belongs to the trehalose phosphatase family. A divalent metal cation serves as cofactor.

It catalyses the reaction alpha,alpha-trehalose 6-phosphate + H2O = alpha,alpha-trehalose + phosphate. It functions in the pathway glycan biosynthesis; trehalose biosynthesis. Removes the phosphate from trehalose 6-phosphate to produce free trehalose. Trehalose accumulation in plant may improve abiotic stress tolerance. In Arabidopsis thaliana (Mouse-ear cress), this protein is Probable trehalose-phosphate phosphatase C (TPPC).